The primary structure comprises 248 residues: Isoprenyl transferase (248 aa).

The active site involves Asp23. Asp23 contacts Mg(2+). Substrate contacts are provided by residues 24 to 27 (GNGR), Trp28, Arg36, His40, and 68 to 70 (STE). Asn71 serves as the catalytic Proton acceptor. Residues Trp72, Arg74, Arg185, and 191–193 (RIS) each bind substrate. Mg(2+) is bound at residue Glu204.

The protein belongs to the UPP synthase family. In terms of assembly, homodimer. Mg(2+) is required as a cofactor.

Functionally, catalyzes the condensation of isopentenyl diphosphate (IPP) with allylic pyrophosphates generating different type of terpenoids. This is Isoprenyl transferase from Neisseria gonorrhoeae (strain ATCC 700825 / FA 1090).